A 458-amino-acid chain; its full sequence is Argininosuccinate lyase (458 aa).

Belongs to the lyase 1 family. Argininosuccinate lyase subfamily.

The protein localises to the cytoplasm. The enzyme catalyses 2-(N(omega)-L-arginino)succinate = fumarate + L-arginine. It functions in the pathway amino-acid biosynthesis; L-arginine biosynthesis; L-arginine from L-ornithine and carbamoyl phosphate: step 3/3. In Pelobacter propionicus (strain DSM 2379 / NBRC 103807 / OttBd1), this protein is Argininosuccinate lyase.